Reading from the N-terminus, the 89-residue chain is Small ribosomal subunit protein uS15 (89 aa).

This sequence belongs to the universal ribosomal protein uS15 family. Part of the 30S ribosomal subunit. Forms a bridge to the 50S subunit in the 70S ribosome, contacting the 23S rRNA.

In terms of biological role, one of the primary rRNA binding proteins, it binds directly to 16S rRNA where it helps nucleate assembly of the platform of the 30S subunit by binding and bridging several RNA helices of the 16S rRNA. Functionally, forms an intersubunit bridge (bridge B4) with the 23S rRNA of the 50S subunit in the ribosome. This is Small ribosomal subunit protein uS15 from Roseiflexus sp. (strain RS-1).